We begin with the raw amino-acid sequence, 886 residues long: DNA repair and recombination protein RAD54B (886 aa).

Residues 1-12 (MRRSAAPSQVQG) are compositionally biased toward polar residues. The interval 1–95 (MRRSAAPSQV…ASKEITESKA (95 aa)) is disordered. Ser14 bears the Phosphoserine mark. The segment covering 47–62 (AEQSQNDPGVCSSNPC) has biased composition (polar residues). 2 stretches are compositionally biased toward basic and acidic residues: residues 67–76 (IPREVGDGTR) and 86–95 (ASKEITESKA). One can recognise a Helicase ATP-binding domain in the interval 291–458 (GMRAVGKCGA…FALVDFVNPG (168 aa)). 304 to 311 (DEMGLGKT) is an ATP binding site. The DEGH box motif lies at 409–412 (DEGH). The region spanning 627–788 (KLLAVIHELR…HIQFSVEELK (162 aa)) is the Helicase C-terminal domain.

The protein belongs to the SNF2/RAD54 helicase family. As to quaternary structure, interacts with RAD51 through the NH2-terminal domain.

It is found in the nucleus. In terms of biological role, involved in DNA repair and mitotic recombination. May play an active role in recombination processes in concert with other members of the RAD52 epistasis group. The sequence is that of DNA repair and recombination protein RAD54B (Rad54b) from Mus musculus (Mouse).